The sequence spans 34 residues: Photosystem II reaction center protein M (34 aa).

The helical transmembrane segment at 5–25 (ILAFIATVLFILVPTAFLLII) threads the bilayer.

This sequence belongs to the PsbM family. In terms of assembly, PSII is composed of 1 copy each of membrane proteins PsbA, PsbB, PsbC, PsbD, PsbE, PsbF, PsbH, PsbI, PsbJ, PsbK, PsbL, PsbM, PsbT, PsbX, PsbY, PsbZ, Psb30/Ycf12, at least 3 peripheral proteins of the oxygen-evolving complex and a large number of cofactors. It forms dimeric complexes.

It localises to the plastid. The protein resides in the chloroplast thylakoid membrane. Its function is as follows. One of the components of the core complex of photosystem II (PSII). PSII is a light-driven water:plastoquinone oxidoreductase that uses light energy to abstract electrons from H(2)O, generating O(2) and a proton gradient subsequently used for ATP formation. It consists of a core antenna complex that captures photons, and an electron transfer chain that converts photonic excitation into a charge separation. This subunit is found at the monomer-monomer interface. In Piper cenocladum (Ant piper), this protein is Photosystem II reaction center protein M.